Reading from the N-terminus, the 78-residue chain is Cytochrome c oxidase subunit 6b-2 (78 aa).

One can recognise a CHCH domain in the interval 22-65 (TRHCFTRYIEFHRCTTAKGEESNDCERFAKYYRALCPGEWVDKW). Residues 25–35 (CFTRYIEFHRC) carry the Cx9C motif motif. 2 disulfide bridges follow: Cys25–Cys57 and Cys35–Cys46. Positions 46–57 (CERFAKYYRALC) match the Cx10C motif motif.

It belongs to the cytochrome c oxidase subunit 6B (TC 3.D.4.8) family. In terms of tissue distribution, specifically expressed in roots.

The protein resides in the mitochondrion. This protein is one of the nuclear-coded polypeptide chains of cytochrome c oxidase, the terminal oxidase in mitochondrial electron transport. This protein may be one of the heme-binding subunits of the oxidase. The protein is Cytochrome c oxidase subunit 6b-2 (COX6B-2) of Arabidopsis thaliana (Mouse-ear cress).